The sequence spans 344 residues: Dihydroorotase (344 aa).

Positions 13 and 15 each coordinate Zn(2+). Residues 15 to 17 and Asn-41 contribute to the substrate site; that span reads HFR. Zn(2+) is bound by residues Lys-98, His-135, and His-173. N6-carboxylysine is present on Lys-98. His-135 contacts substrate. Leu-218 lines the substrate pocket. A Zn(2+)-binding site is contributed by Asp-246. Asp-246 is an active-site residue. 2 residues coordinate substrate: His-250 and Ala-262.

Belongs to the metallo-dependent hydrolases superfamily. DHOase family. Class II DHOase subfamily. In terms of assembly, homodimer. Zn(2+) is required as a cofactor.

The enzyme catalyses (S)-dihydroorotate + H2O = N-carbamoyl-L-aspartate + H(+). It participates in pyrimidine metabolism; UMP biosynthesis via de novo pathway; (S)-dihydroorotate from bicarbonate: step 3/3. Functionally, catalyzes the reversible cyclization of carbamoyl aspartate to dihydroorotate. The protein is Dihydroorotase of Shewanella sediminis (strain HAW-EB3).